The primary structure comprises 228 residues: 2,3-bisphosphoglycerate-dependent phosphoglycerate mutase (228 aa).

Substrate-binding positions include 8–15 (RHGQSAWN), 21–22 (TG), arginine 60, 87–90 (ERHY), lysine 98, 114–115 (RR), and 180–181 (GN). Histidine 9 (tele-phosphohistidine intermediate) is an active-site residue. Glutamate 87 serves as the catalytic Proton donor/acceptor.

It belongs to the phosphoglycerate mutase family. BPG-dependent PGAM subfamily. As to quaternary structure, homodimer.

It carries out the reaction (2R)-2-phosphoglycerate = (2R)-3-phosphoglycerate. It participates in carbohydrate degradation; glycolysis; pyruvate from D-glyceraldehyde 3-phosphate: step 3/5. Its function is as follows. Catalyzes the interconversion of 2-phosphoglycerate and 3-phosphoglycerate. This is 2,3-bisphosphoglycerate-dependent phosphoglycerate mutase from Rhizorhabdus wittichii (strain DSM 6014 / CCUG 31198 / JCM 15750 / NBRC 105917 / EY 4224 / RW1) (Sphingomonas wittichii).